A 470-amino-acid polypeptide reads, in one-letter code: Alpha-1A adrenergic receptor (470 aa).

Residues 1–27 (MTPSSVTLNCSNCSHVLAPELNTVKAV) are Extracellular-facing. 2 N-linked (GlcNAc...) asparagine glycosylation sites follow: N9 and N12. Residues 28–51 (VLGMVLGIFILFGVIGNILVILSV) form a helical membrane-spanning segment. At 52 to 64 (VCHRHLQTVTYYF) the chain is on the cytoplasmic side. The chain crosses the membrane as a helical span at residues 65–88 (IVNLAVADLLLSSTVLPFSAIFEI). The Extracellular segment spans residues 89–99 (LDRWVFGRVFC). A disulfide bridge links C99 with C176. A helical transmembrane segment spans residues 100–122 (NIWAAVDVLCCTASIMSLCVISV). Over 123–143 (DRYIGVSYPLRYPAIMTKRRA) the chain is Cytoplasmic. A helical membrane pass occupies residues 144 to 167 (LLAVMLLWVLSVIISIGPLFGWKE). Residues 168 to 181 (PAPEDETVCKITEE) lie on the Extracellular side of the membrane. A helical membrane pass occupies residues 182–205 (PGYAIFSAVGSFYLPLAIILAMYC). The Cytoplasmic segment spans residues 206 to 271 (RVYVVAQKES…FSREKKAAKT (66 aa)). A helical transmembrane segment spans residues 272–295 (LGIVVGCFVLCWLPFFLVLPIGSI). Residues 296-303 (FPAYRPSD) lie on the Extracellular side of the membrane. Residues 304 to 327 (TVFKITFWLGYFNSCINPIIYLCS) traverse the membrane as a helical segment. Over 328 to 470 (NQEFKKAFQS…LSLSEKGESV (143 aa)) the chain is Cytoplasmic. C343 carries the S-palmitoyl cysteine lipid modification. Residues 375 to 416 (GAPCRLSPSSSVALSRTPSSRDSREWRVFSGGPINSGPGPTE) are disordered. The span at 381-392 (SPSSSVALSRTP) shows a compositional bias: polar residues.

Belongs to the G-protein coupled receptor 1 family. Adrenergic receptor subfamily. ADRA1A sub-subfamily.

Its subcellular location is the cell membrane. Its function is as follows. This alpha-adrenergic receptor mediates its action by association with G proteins that activate a phosphatidylinositol-calcium second messenger system. This is Alpha-1A adrenergic receptor (adra1a) from Oryzias latipes (Japanese rice fish).